A 111-amino-acid polypeptide reads, in one-letter code: Large ribosomal subunit protein uL22 (111 aa).

This sequence belongs to the universal ribosomal protein uL22 family. Part of the 50S ribosomal subunit.

This protein binds specifically to 23S rRNA; its binding is stimulated by other ribosomal proteins, e.g. L4, L17, and L20. It is important during the early stages of 50S assembly. It makes multiple contacts with different domains of the 23S rRNA in the assembled 50S subunit and ribosome. In terms of biological role, the globular domain of the protein is located near the polypeptide exit tunnel on the outside of the subunit, while an extended beta-hairpin is found that lines the wall of the exit tunnel in the center of the 70S ribosome. In Citrifermentans bemidjiense (strain ATCC BAA-1014 / DSM 16622 / JCM 12645 / Bem) (Geobacter bemidjiensis), this protein is Large ribosomal subunit protein uL22.